A 361-amino-acid chain; its full sequence is Alanine racemase (361 aa).

The Proton acceptor; specific for D-alanine role is filled by Lys-34. Lys-34 carries the post-translational modification N6-(pyridoxal phosphate)lysine. A substrate-binding site is contributed by Arg-129. Tyr-256 (proton acceptor; specific for L-alanine) is an active-site residue. Residue Met-304 coordinates substrate.

It belongs to the alanine racemase family. Homodimer. Pyridoxal 5'-phosphate serves as cofactor.

The enzyme catalyses L-alanine = D-alanine. Its pathway is amino-acid biosynthesis; D-alanine biosynthesis; D-alanine from L-alanine: step 1/1. Catalyzes the interconversion of L-alanine and D-alanine. May also act on other amino acids. This chain is Alanine racemase (alr), found in Corynebacterium glutamicum (strain ATCC 13032 / DSM 20300 / JCM 1318 / BCRC 11384 / CCUG 27702 / LMG 3730 / NBRC 12168 / NCIMB 10025 / NRRL B-2784 / 534).